The sequence spans 390 residues: Phosphoglycerate kinase (390 aa).

Substrate contacts are provided by residues 21–23 (DLN), R36, 59–62 (HLGR), R112, and R145. ATP is bound by residues K196, E317, and 343–346 (GGDT).

The protein belongs to the phosphoglycerate kinase family. As to quaternary structure, monomer.

It localises to the cytoplasm. The catalysed reaction is (2R)-3-phosphoglycerate + ATP = (2R)-3-phospho-glyceroyl phosphate + ADP. It functions in the pathway carbohydrate degradation; glycolysis; pyruvate from D-glyceraldehyde 3-phosphate: step 2/5. In Cellvibrio japonicus (strain Ueda107) (Pseudomonas fluorescens subsp. cellulosa), this protein is Phosphoglycerate kinase.